Here is a 378-residue protein sequence, read N- to C-terminus: MKLKFDLKKKNGNARRGQLTFERGTVQTPAFMPVGTYGTVKGMTPEEVKETGAEILLGNTFHLWLRPGQEVMKMHGDLHDFMNWQGPILTDSGGFQVFSLGDIRKITEEGVHFRNPVNGDKIFMDAEKSMEIQKDLGSDIVMIFDECTPYPATHAEAKKSMEMSLRWAQRSRDHFDKLENPNNLFGIVQGGVYEDLRDVSVKGLTEIGFDGYAVGGLAVGEPKEDMHRVLEHTCPQLPEDKPRYLMGVGKPEDLVEGVRRGIDMFDCVMPTRNARNGHLFVTGGVIKIRNATHKTDTTPLDPHCDCYTCKNYSKSYLHHLDRCNEILGARLNTIHNLRYYQRLMESIRKAIDEDRFEQFVEEFYARRNREVPPLGKQA.

The active-site Proton acceptor is Asp91. Residues 91–95, Asp145, Gln189, and Gly216 contribute to the substrate site; that span reads DSGGF. The segment at 247-253 is RNA binding; the sequence is GVGKPED. Asp266 serves as the catalytic Nucleophile. Residues 271–275 form an RNA binding; important for wobble base 34 recognition region; that stretch reads TRNAR. Zn(2+) is bound by residues Cys304, Cys306, Cys309, and His335.

It belongs to the queuine tRNA-ribosyltransferase family. Homodimer. Within each dimer, one monomer is responsible for RNA recognition and catalysis, while the other monomer binds to the replacement base PreQ1. The cofactor is Zn(2+).

The catalysed reaction is 7-aminomethyl-7-carbaguanine + guanosine(34) in tRNA = 7-aminomethyl-7-carbaguanosine(34) in tRNA + guanine. It participates in tRNA modification; tRNA-queuosine biosynthesis. Its function is as follows. Catalyzes the base-exchange of a guanine (G) residue with the queuine precursor 7-aminomethyl-7-deazaguanine (PreQ1) at position 34 (anticodon wobble position) in tRNAs with GU(N) anticodons (tRNA-Asp, -Asn, -His and -Tyr). Catalysis occurs through a double-displacement mechanism. The nucleophile active site attacks the C1' of nucleotide 34 to detach the guanine base from the RNA, forming a covalent enzyme-RNA intermediate. The proton acceptor active site deprotonates the incoming PreQ1, allowing a nucleophilic attack on the C1' of the ribose to form the product. After dissociation, two additional enzymatic reactions on the tRNA convert PreQ1 to queuine (Q), resulting in the hypermodified nucleoside queuosine (7-(((4,5-cis-dihydroxy-2-cyclopenten-1-yl)amino)methyl)-7-deazaguanosine). In Vibrio vulnificus (strain CMCP6), this protein is Queuine tRNA-ribosyltransferase.